The sequence spans 152 residues: Ribonuclease H (152 aa).

The RNase H type-1 domain occupies 6–147 (KKNRVIAYTD…ADELANKAIA (142 aa)). Positions 15, 53, 75, and 139 each coordinate Mg(2+).

The protein belongs to the RNase H family. In terms of assembly, monomer. Requires Mg(2+) as cofactor.

The protein resides in the cytoplasm. The enzyme catalyses Endonucleolytic cleavage to 5'-phosphomonoester.. Its function is as follows. Endonuclease that specifically degrades the RNA of RNA-DNA hybrids. This chain is Ribonuclease H, found in Francisella tularensis subsp. tularensis (strain FSC 198).